Here is a 325-residue protein sequence, read N- to C-terminus: Probable isoaspartyl peptidase/L-asparaginase 2 (325 aa).

Catalysis depends on Thr-195, which acts as the Nucleophile. Residues 223–226 (RIGD) and 245–248 (TGEG) contribute to the substrate site.

The protein belongs to the Ntn-hydrolase family. In terms of assembly, heterotetramer of two alpha and two beta chains arranged as a dimer of alpha/beta heterodimers. Cleaved into an alpha and beta chain by autocatalysis; this activates the enzyme. The N-terminal residue of the beta subunit is responsible for the nucleophile hydrolase activity.

The catalysed reaction is Cleavage of a beta-linked Asp residue from the N-terminus of a polypeptide.. Its function is as follows. Acts in asparagine catabolism and also in the final steps of protein degradation via hydrolysis of a range of isoaspartyl dipeptides. The sequence is that of Probable isoaspartyl peptidase/L-asparaginase 2 from Arabidopsis thaliana (Mouse-ear cress).